A 95-amino-acid polypeptide reads, in one-letter code: Small ribosomal subunit protein bS6 (95 aa).

This sequence belongs to the bacterial ribosomal protein bS6 family.

Functionally, binds together with bS18 to 16S ribosomal RNA. The polypeptide is Small ribosomal subunit protein bS6 (Onion yellows phytoplasma (strain OY-M)).